A 99-amino-acid polypeptide reads, in one-letter code: Nucleoid-associated protein str1598 (99 aa).

It belongs to the YbaB/EbfC family. In terms of assembly, homodimer.

The protein resides in the cytoplasm. It is found in the nucleoid. In terms of biological role, binds to DNA and alters its conformation. May be involved in regulation of gene expression, nucleoid organization and DNA protection. The protein is Nucleoid-associated protein str1598 of Streptococcus thermophilus (strain CNRZ 1066).